A 216-amino-acid chain; its full sequence is Ceramide-1-phosphate transfer protein (216 aa).

Aspartate 56, lysine 60, arginine 108, arginine 112, and histidine 152 together coordinate an N-acylsphingoid base 1-phosphate.

The protein belongs to the GLTP family.

Its subcellular location is the cytoplasm. It localises to the cytosol. The protein resides in the golgi apparatus. The protein localises to the trans-Golgi network membrane. It is found in the cell membrane. Its subcellular location is the endosome membrane. It localises to the nucleus outer membrane. It carries out the reaction N-(hexadecanoyl)-sphing-4-enine-1-phosphate(in) = N-(hexadecanoyl)-sphing-4-enine-1-phosphate(out). The catalysed reaction is N-(9Z-octadecenoyl)-sphing-4-enine-1-phosphate(in) = N-(9Z-octadecenoyl)-sphing-4-enine-1-phosphate(out). Mediates the intracellular transfer of ceramide-1-phosphate (C1P) between organelle membranes and the cell membrane. Required for normal structure of the Golgi stacks. Can bind phosphoceramides with a variety of aliphatic chains, but has a preference for lipids with saturated C16:0 or monounsaturated C18:1 aliphatic chains, and is inefficient with phosphoceramides containing lignoceryl (C24:0). Plays a role in the regulation of the cellular levels of ceramide-1-phosphate, and thereby contributes to the regulation of phospholipase PLA2G4A activity and the release of arachidonic acid. Has no activity with galactosylceramide, lactosylceramide, sphingomyelin, phosphatidylcholine, phosphatidic acid and ceramide. C1P transfer is stimulated by phosphatidylserine in C1P source vesicles. Regulates autophagy, inflammasome mediated IL1B and IL18 processing, and pyroptosis, but not apoptosis. In Rattus norvegicus (Rat), this protein is Ceramide-1-phosphate transfer protein (Cptp).